Here is a 419-residue protein sequence, read N- to C-terminus: L-rhamnose isomerase (419 aa).

Mn(2+) contacts are provided by H262, D294, and D296.

Belongs to the rhamnose isomerase family. As to quaternary structure, homotetramer. The cofactor is Mn(2+).

It is found in the cytoplasm. The enzyme catalyses L-rhamnopyranose = L-rhamnulose. It functions in the pathway carbohydrate degradation; L-rhamnose degradation; glycerone phosphate from L-rhamnose: step 1/3. Its function is as follows. Catalyzes the interconversion of L-rhamnose and L-rhamnulose. This chain is L-rhamnose isomerase, found in Enterobacter sp. (strain 638).